The primary structure comprises 333 residues: DNA repair and recombination protein RadA (333 aa).

127–134 (GEFGSGKT) serves as a coordination point for ATP.

The protein belongs to the eukaryotic RecA-like protein family.

Involved in DNA repair and in homologous recombination. Binds and assemble on single-stranded DNA to form a nucleoprotein filament. Hydrolyzes ATP in a ssDNA-dependent manner and promotes DNA strand exchange between homologous DNA molecules. This chain is DNA repair and recombination protein RadA, found in Pyrobaculum aerophilum (strain ATCC 51768 / DSM 7523 / JCM 9630 / CIP 104966 / NBRC 100827 / IM2).